The following is a 249-amino-acid chain: Uridylate kinase (249 aa).

22-25 (KISG) is an ATP binding site. Residues 30–35 (GTQGFG) form an involved in allosteric activation by GTP region. Glycine 64 is a binding site for UMP. Glycine 65 and arginine 69 together coordinate ATP. UMP-binding positions include aspartate 84 and 145–152 (TGNPYFTT). Residues asparagine 173, tyrosine 179, and aspartate 182 each coordinate ATP.

It belongs to the UMP kinase family. Homohexamer.

It localises to the cytoplasm. It carries out the reaction UMP + ATP = UDP + ADP. The protein operates within pyrimidine metabolism; CTP biosynthesis via de novo pathway; UDP from UMP (UMPK route): step 1/1. With respect to regulation, allosterically activated by GTP. Inhibited by UTP. Its function is as follows. Catalyzes the reversible phosphorylation of UMP to UDP. The sequence is that of Uridylate kinase from Ruegeria sp. (strain TM1040) (Silicibacter sp.).